The primary structure comprises 88 residues: Large ribosomal subunit protein eL31 (88 aa).

This sequence belongs to the eukaryotic ribosomal protein eL31 family.

The protein is Large ribosomal subunit protein eL31 of Methanoregula boonei (strain DSM 21154 / JCM 14090 / 6A8).